A 305-amino-acid polypeptide reads, in one-letter code: MAGLKVEWNDWCPGCGNFGILSAEQQAIQELGLDPKKVVLVSGIGCSGKIPHFIRLPASGVHTLHGRALTFAIGIKLANPSLEVIVNGGDGDQLGIGVGHFVSAGRRNVDLTVIVHNNGVYGLTKGQASPTLKLGVKTKSLPKPNINSDINPIALAISSGYTFVARGYAYDVKHLKEIIKKAIKHKGLAMIDVLQPCPTYNDIHTKEYYDKRVYKLDEDPSWDPIVKKPEEMDDKMSKAILKSMEWGDRTPIGIFYQNELVSTYEQRIAERSPSYLDNPPAHDVIEFEGKPTTDVEDILKERRVT.

Cysteine 12, cysteine 15, and cysteine 46 together coordinate [4Fe-4S] cluster. Thiamine diphosphate is bound by residues 44–47 and histidine 65; that span reads IGCS. Mg(2+) is bound at residue aspartate 90. A thiamine diphosphate-binding site is contributed by 91–92; the sequence is GD. 2 residues coordinate Mg(2+): asparagine 118 and valine 120. 122-123 is a binding site for thiamine diphosphate; sequence GL. Position 197 (cysteine 197) interacts with [4Fe-4S] cluster.

As to quaternary structure, heterodimer composed of an alpha and a beta subunit. It depends on [4Fe-4S] cluster as a cofactor. Requires thiamine diphosphate as cofactor. Mg(2+) is required as a cofactor.

It carries out the reaction a 2-oxocarboxylate + 2 oxidized [2Fe-2S]-[ferredoxin] + CoA = an acyl-CoA + 2 reduced [2Fe-2S]-[ferredoxin] + CO2 + H(+). In terms of biological role, catalyzes the coenzyme A-dependent oxidative decarboxylation of different 2-oxoacids such as 2-oxoglutarate, pyruvate and 2-oxobutyrate to form their CoA derivatives. The sequence is that of 2-oxoacid:ferredoxin oxidoreductase subunit beta from Saccharolobus solfataricus (Sulfolobus solfataricus).